A 444-amino-acid polypeptide reads, in one-letter code: Phosphoglucosamine mutase (444 aa).

The active-site Phosphoserine intermediate is Ser-104. Positions 104, 243, 245, and 247 each coordinate Mg(2+). At Ser-104 the chain carries Phosphoserine.

This sequence belongs to the phosphohexose mutase family. The cofactor is Mg(2+). Activated by phosphorylation.

The enzyme catalyses alpha-D-glucosamine 1-phosphate = D-glucosamine 6-phosphate. Catalyzes the conversion of glucosamine-6-phosphate to glucosamine-1-phosphate. The sequence is that of Phosphoglucosamine mutase from Neisseria meningitidis serogroup C (strain 053442).